Reading from the N-terminus, the 228-residue chain is UPF0758 protein Gura_4138 (228 aa).

The MPN domain maps to 106 to 228; sequence RFTSPSQVFE…FLSFVDRGMM (123 aa). The Zn(2+) site is built by His-177, His-179, and Asp-190. The JAMM motif motif lies at 177–190; the sequence is HNHPTGDPTPSRED.

This sequence belongs to the UPF0758 family.

This is UPF0758 protein Gura_4138 from Geotalea uraniireducens (strain Rf4) (Geobacter uraniireducens).